The sequence spans 765 residues: Dipeptidyl peptidase 4 (765 aa).

Residues 1-6 (MKTPWK) lie on the Cytoplasmic side of the membrane. The chain crosses the membrane as a helical; Signal-anchor for type II membrane protein span at residues 7 to 29 (VLLGLLGLAALITIITVPVVLLN). At 30-765 (KGNDAAADSR…HFIKQCFSLP (736 aa)) the chain is on the extracellular side. N-linked (GlcNAc...) asparagine glycosylation is found at Asn-84, Asn-91, Asn-149, Asn-178, Asn-228, Asn-280, Asn-320, Asn-330, and Asn-331. Cystine bridges form between Cys-384/Cys-393, Cys-443/Cys-446, and Cys-453/Cys-471. Asn-519 is a glycosylation site (N-linked (GlcNAc...) asparagine). The Charge relay system role is filled by Ser-629. Cys-648 and Cys-761 are oxidised to a cystine. N-linked (GlcNAc...) asparagine glycosylation occurs at Asn-684. Catalysis depends on charge relay system residues Asp-707 and His-739.

It belongs to the peptidase S9B family. DPPIV subfamily. In terms of assembly, monomer. Homodimer. Heterodimer with Seprase (FAP). Requires homodimerization for optimal dipeptidyl peptidase activity and T-cell costimulation. Found in a membrane raft complex, at least composed of BCL10, CARD11, DPP4 and IKBKB. Associates with collagen. Interacts with PTPRC; the interaction is enhanced in an interleukin-12-dependent manner in activated lymphocytes. Interacts (extracellular domain) with ADA; does not inhibit its dipeptidyl peptidase activity. Interacts with CAV1 (via the N-terminus); the interaction is direct. Interacts (via cytoplasmic tail) with CARD11 (via PDZ domain); its homodimerization is necessary for interaction with CARD11. Interacts with IGF2R; the interaction is direct. Interacts with GPC3. In terms of processing, the soluble form (Dipeptidyl peptidase 4 soluble form also named SDPP) derives from the membrane form (Dipeptidyl peptidase 4 membrane form also named MDPP) by proteolytic processing. Post-translationally, N- and O-Glycosylated. Phosphorylated. Mannose 6-phosphate residues in the carbohydrate moiety are necessary for interaction with IGF2R in activated T-cells. Mannose 6-phosphorylation is induced during T-cell activation.

The protein localises to the secreted. The protein resides in the cell membrane. It localises to the apical cell membrane. It is found in the cell projection. Its subcellular location is the invadopodium membrane. The protein localises to the lamellipodium membrane. The protein resides in the cell junction. It localises to the membrane raft. The catalysed reaction is Release of an N-terminal dipeptide, Xaa-Yaa-|-Zaa-, from a polypeptide, preferentially when Yaa is Pro, provided Zaa is neither Pro nor hydroxyproline.. Inhibited by GPC3 and diprotin A. Functionally, cell surface glycoprotein receptor involved in the costimulatory signal essential for T-cell receptor (TCR)-mediated T-cell activation. Acts as a positive regulator of T-cell coactivation, by binding at least ADA, CAV1, IGF2R, and PTPRC. Its binding to CAV1 and CARD11 induces T-cell proliferation and NF-kappa-B activation in a T-cell receptor/CD3-dependent manner. Its interaction with ADA also regulates lymphocyte-epithelial cell adhesion. In association with FAP is involved in the pericellular proteolysis of the extracellular matrix (ECM), the migration and invasion of endothelial cells into the ECM. May be involved in the promotion of lymphatic endothelial cells adhesion, migration and tube formation. When overexpressed, enhanced cell proliferation, a process inhibited by GPC3. Also acts as a serine exopeptidase with a dipeptidyl peptidase activity that regulates various physiological processes by cleaving peptides in the circulation, including many chemokines, mitogenic growth factors, neuropeptides and peptide hormones. Removes N-terminal dipeptides sequentially from polypeptides having unsubstituted N-termini provided that the penultimate residue is proline. This is Dipeptidyl peptidase 4 (DPP4) from Felis catus (Cat).